Consider the following 298-residue polypeptide: Tyrosine recombinase XerD (298 aa).

The 86-residue stretch at 3 to 88 (TLEHPLIDRF…GLRGFYRYCL (86 aa)) folds into the Core-binding (CB) domain. A Tyr recombinase domain is found at 109-292 (PLPKSLSEAD…ARARLQDLHA (184 aa)). Active-site residues include Arg-149, Lys-173, His-244, Arg-247, and His-270. Tyr-279 serves as the catalytic O-(3'-phospho-DNA)-tyrosine intermediate.

The protein belongs to the 'phage' integrase family. XerD subfamily. In terms of assembly, forms a cyclic heterotetrameric complex composed of two molecules of XerC and two molecules of XerD.

It is found in the cytoplasm. In terms of biological role, site-specific tyrosine recombinase, which acts by catalyzing the cutting and rejoining of the recombining DNA molecules. The XerC-XerD complex is essential to convert dimers of the bacterial chromosome into monomers to permit their segregation at cell division. It also contributes to the segregational stability of plasmids. The sequence is that of Tyrosine recombinase XerD from Pseudomonas aeruginosa (strain ATCC 15692 / DSM 22644 / CIP 104116 / JCM 14847 / LMG 12228 / 1C / PRS 101 / PAO1).